Consider the following 189-residue polypeptide: HGPRTase-like protein (189 aa).

It belongs to the purine/pyrimidine phosphoribosyltransferase family. Archaeal HPRT subfamily.

In terms of biological role, may catalyze a purine salvage reaction, the substrate is unknown. This Halomicrobium mukohataei (strain ATCC 700874 / DSM 12286 / JCM 9738 / NCIMB 13541) (Haloarcula mukohataei) protein is HGPRTase-like protein.